The following is a 118-amino-acid chain: Small ribosomal subunit protein bS6 (118 aa).

The protein belongs to the bacterial ribosomal protein bS6 family.

Functionally, binds together with bS18 to 16S ribosomal RNA. The sequence is that of Small ribosomal subunit protein bS6 from Parabacteroides distasonis (strain ATCC 8503 / DSM 20701 / CIP 104284 / JCM 5825 / NCTC 11152).